The primary structure comprises 302 residues: GrpE protein homolog 1, mitochondrial (302 aa).

The N-terminal 39 residues, 1-39 (MLVSRVLSRVSRSAGLRSSFSSVVTPKRNQIPIVASRFH), are a transit peptide targeting the mitochondrion. The segment at 77-97 (SAEPKGNESNTEVPKTGETSE) is disordered.

The protein belongs to the GrpE family. In terms of assembly, probable component of the PAM complex, at least composed of SSC1 (mtHsp70), MGE1, TIM44, PAM16/TIM16, PAM17 and PAM18/TIM14. Interacts with SSQ1.

It is found in the mitochondrion matrix. In terms of biological role, essential component of the PAM complex, a complex required for the translocation of transit peptide-containing proteins from the inner membrane into the mitochondrial matrix in an ATP-dependent manner. Seems to control the nucleotide-dependent binding of mitochondrial HSP70 to substrate proteins. Binds ATP. Interacts with copper ions Cu(2+). This chain is GrpE protein homolog 1, mitochondrial, found in Arabidopsis thaliana (Mouse-ear cress).